We begin with the raw amino-acid sequence, 360 residues long: Inhibin alpha chain (360 aa).

The signal sequence occupies residues 1–17; sequence MWLQLLLLLLAPQGGHG. The propeptide occupies 18–60; sequence CHGLELDRELVLAKVRALFLDALGPPPVTGEGGDPGVRRLHRR. Residues 61–226 constitute a propeptide, inhibin alpha N-terminal region; that stretch reads HAVGGFMRRG…PPSGGERARR (166 aa). 2 N-linked (GlcNAc...) asparagine glycosylation sites follow: N140 and N262. 3 disulfide bridges follow: C256–C322, C285–C357, and C289–C359.

The protein belongs to the TGF-beta family. In terms of assembly, dimeric, linked by one or more disulfide bonds. Activin B is a dimer of alpha and beta-B. Inhibin A is a dimer of alpha and beta-A. Inhibin B is a dimer of alpha and beta-B. Interacts with TGFBR3L; this interaction regulates female fertility. Proteolytic processing yields a number of bioactive forms, consisting either solely of the mature alpha chain, of the most N-terminal propeptide linked through a disulfide bond to the mature alpha chain, or of the entire proprotein.

The protein resides in the secreted. Functionally, inhibins and activins inhibit and activate, respectively, the secretion of follitropin by the pituitary gland. Inhibins/activins are involved in regulating a number of diverse functions such as hypothalamic and pituitary hormone secretion, gonadal hormone secretion, germ cell development and maturation, erythroid differentiation, insulin secretion, nerve cell survival, embryonic axial development or bone growth, depending on their subunit composition. Inhibins appear to oppose the functions of activins. Inhibin A is a dimer of alpha/INHA and beta-A/INHBA that functions as a feedback regulator in the hypothalamic-pituitary-gonadal (HPG) axis. Inhibits the secretion of FSH from the anterior pituitary gland by acting on pituitary gonadotrope cells. Antagonizes activin A by binding to the proteoglycan, betaglycan, and forming a stable complex with and, thereby, sequestering type II activin receptors while excluding type I receptor. Its function is as follows. Inhibin B is a dimer of alpha and beta-B that plays a crucial role in the regulation of the reproductive system by inhibiting the secretion of follicle-stimulating hormone (FSH) from the anterior pituitary gland. Thereby, maintains reproductive homeostasis in both males and females. Acts as a more potent suppressor of FSH release than inhibin A. Functions as competitive receptor antagonist binding activin type II receptors with high affinity in the presence of the TGF-beta type III coreceptor/TGFBR3L. The protein is Inhibin alpha chain (INHA) of Bos taurus (Bovine).